The following is a 688-amino-acid chain: Beta-galactosidase BglY (688 aa).

A substrate-binding site is contributed by arginine 118. A Zn(2+)-binding site is contributed by cysteine 122. Asparagine 156 contacts substrate. Glutamate 157 acts as the Proton donor in catalysis. Zn(2+) is bound by residues cysteine 162, cysteine 164, and cysteine 167. The active-site Nucleophile is the glutamate 313. Substrate is bound by residues tryptophan 321 and 361–364 (EKFH).

It belongs to the glycosyl hydrolase 42 family.

The enzyme catalyses Hydrolysis of terminal non-reducing beta-D-galactose residues in beta-D-galactosides.. Ca(2+), Mg(2+) and EDTA have little effect on enzyme activity at 1-10 mM. Zn(2+) at 3, 5, 7 or 10 mM inhibits activity by 20%, 30%, 40% and 65%, respectively. Hydrolyzes o-nitrophenyl-beta-D-galactopyranoside (ONPG) and p-nitrophenyl-beta-D-fucopyranoside (PNPF), but not p-nitrophenyl-beta-D-glucopyranoside (PNPG), p-nitrophenyl-beta-D-xylopyranoside (PNPX) or p-nitrophenyl-beta-D-arabinopyranoside (PNPA). Also hydrolyzes lactose, including lactose in milk. In Alicyclobacillus acidocaldarius subsp. acidocaldarius (strain ATCC 27009 / DSM 446 / BCRC 14685 / JCM 5260 / KCTC 1825 / NBRC 15652 / NCIMB 11725 / NRRL B-14509 / 104-IA) (Bacillus acidocaldarius), this protein is Beta-galactosidase BglY (bglY).